A 107-amino-acid chain; its full sequence is MMKVLVVVALLVTLISYSSSEGIDDLEADELLSLMANEHPRKECIPKHHECTSNKHGCCRGNFFKYKCQCTTVVAQDGEQTERCFCGTPPHHKAAELVVGFGKKIFG.

A signal peptide spans 1–20; that stretch reads MMKVLVVVALLVTLISYSSS. Positions 21–41 are excised as a propeptide; it reads EGIDDLEADELLSLMANEHPR. 4 disulfide bridges follow: Cys44–Cys59, Cys51–Cys68, Cys58–Cys86, and Cys70–Cys84.

The protein belongs to the neurotoxin 19 (CSTX) family. 04 (U1-Lctx) subfamily. Expressed by the venom gland.

The protein localises to the secreted. This is U1-lycotoxin-Ls1x from Lycosa singoriensis (Wolf spider).